The primary structure comprises 239 residues: Purine nucleoside phosphorylase DeoD-type (239 aa).

His-5 provides a ligand contact to a purine D-ribonucleoside. Phosphate-binding positions include Gly-21, Arg-25, Arg-44, and 88-91 (RVGS). Residues 180 to 182 (EME) and 204 to 205 (SD) contribute to the a purine D-ribonucleoside site. Residue Asp-205 is the Proton donor of the active site.

It belongs to the PNP/UDP phosphorylase family. In terms of assembly, homohexamer; trimer of homodimers.

The enzyme catalyses a purine D-ribonucleoside + phosphate = a purine nucleobase + alpha-D-ribose 1-phosphate. It carries out the reaction a purine 2'-deoxy-D-ribonucleoside + phosphate = a purine nucleobase + 2-deoxy-alpha-D-ribose 1-phosphate. Catalyzes the reversible phosphorolytic breakdown of the N-glycosidic bond in the beta-(deoxy)ribonucleoside molecules, with the formation of the corresponding free purine bases and pentose-1-phosphate. The polypeptide is Purine nucleoside phosphorylase DeoD-type (Salmonella choleraesuis (strain SC-B67)).